Consider the following 68-residue polypeptide: Stage III sporulation protein AC (68 aa).

The next 2 membrane-spanning stretches (helical) occupy residues 5–25 and 33–53; these read VNVIFQIAGVGIVVAFLHTIL and YAQWVTLLGFIYILFMVATIV.

The protein localises to the cell membrane. The chain is Stage III sporulation protein AC (spoIIIAC) from Bacillus subtilis (strain 168).